The primary structure comprises 343 residues: UDP-3-O-acylglucosamine N-acyltransferase (343 aa).

His-236 serves as the catalytic Proton acceptor.

This sequence belongs to the transferase hexapeptide repeat family. LpxD subfamily. Homotrimer.

The enzyme catalyses a UDP-3-O-[(3R)-3-hydroxyacyl]-alpha-D-glucosamine + a (3R)-hydroxyacyl-[ACP] = a UDP-2-N,3-O-bis[(3R)-3-hydroxyacyl]-alpha-D-glucosamine + holo-[ACP] + H(+). The protein operates within bacterial outer membrane biogenesis; LPS lipid A biosynthesis. Catalyzes the N-acylation of UDP-3-O-acylglucosamine using 3-hydroxyacyl-ACP as the acyl donor. Is involved in the biosynthesis of lipid A, a phosphorylated glycolipid that anchors the lipopolysaccharide to the outer membrane of the cell. The chain is UDP-3-O-acylglucosamine N-acyltransferase from Syntrophotalea carbinolica (strain DSM 2380 / NBRC 103641 / GraBd1) (Pelobacter carbinolicus).